We begin with the raw amino-acid sequence, 260 residues long: MQKDYQKLIVYLCDFLEKEVQKKGFKKVVYGLSGGLDSAVVGVLCQKVFKENAHALLMPSSVSMPESRTDALNLCEKFSIPYTEYSIAPYDKIFGSHFKDASLTRKGNFCARLRMAFLYDYSLKSDSLVIGTSNKSERMLGYGTLFGDLACAINPIGELFKTEVYELAYYLNIPKKILNKPPSADLFVGQSDEKDLGYPYSVIDPLLKDIEALFQTKPIHLETLIQLGYAEILVKNIISRIQKNAFKLELPTIAKRFNPE.

31–38 (GLSGGLDS) contributes to the ATP binding site. Residue aspartate 37 participates in Mg(2+) binding. Arginine 112 is a binding site for deamido-NAD(+). Threonine 132 is an ATP binding site. Position 137 (glutamate 137) interacts with Mg(2+). Positions 161 and 183 each coordinate ATP.

It belongs to the NAD synthetase family. As to quaternary structure, homodimer.

The catalysed reaction is deamido-NAD(+) + NH4(+) + ATP = AMP + diphosphate + NAD(+) + H(+). It functions in the pathway cofactor biosynthesis; NAD(+) biosynthesis; NAD(+) from deamido-NAD(+) (ammonia route): step 1/1. Functionally, catalyzes the ATP-dependent amidation of deamido-NAD to form NAD. Uses ammonia as a nitrogen source. The sequence is that of NH(3)-dependent NAD(+) synthetase from Helicobacter pylori (strain J99 / ATCC 700824) (Campylobacter pylori J99).